Here is a 175-residue protein sequence, read N- to C-terminus: Shikimate kinase (175 aa).

Residue 12–17 (GAGKTT) participates in ATP binding. Thr16 provides a ligand contact to Mg(2+). The substrate site is built by Asp34, Arg58, and Gly80. Residue Arg117 coordinates ATP. Arg136 contacts substrate.

This sequence belongs to the shikimate kinase family. In terms of assembly, monomer. It depends on Mg(2+) as a cofactor.

It is found in the cytoplasm. The catalysed reaction is shikimate + ATP = 3-phosphoshikimate + ADP + H(+). It participates in metabolic intermediate biosynthesis; chorismate biosynthesis; chorismate from D-erythrose 4-phosphate and phosphoenolpyruvate: step 5/7. Its function is as follows. Catalyzes the specific phosphorylation of the 3-hydroxyl group of shikimic acid using ATP as a cosubstrate. The sequence is that of Shikimate kinase from Saccharopolyspora erythraea (strain ATCC 11635 / DSM 40517 / JCM 4748 / NBRC 13426 / NCIMB 8594 / NRRL 2338).